The sequence spans 185 residues: ATP synthase subunit b 1 (185 aa).

The helical transmembrane segment at 4 to 24 (TLAIALTLATTSPAFAAGGGW) threads the bilayer.

This sequence belongs to the ATPase B chain family. F-type ATPases have 2 components, F(1) - the catalytic core - and F(0) - the membrane proton channel. F(1) has five subunits: alpha(3), beta(3), gamma(1), delta(1), epsilon(1). F(0) has three main subunits: a(1), b(2) and c(10-14). The alpha and beta chains form an alternating ring which encloses part of the gamma chain. F(1) is attached to F(0) by a central stalk formed by the gamma and epsilon chains, while a peripheral stalk is formed by the delta and b chains.

The protein localises to the cell inner membrane. Functionally, f(1)F(0) ATP synthase produces ATP from ADP in the presence of a proton or sodium gradient. F-type ATPases consist of two structural domains, F(1) containing the extramembraneous catalytic core and F(0) containing the membrane proton channel, linked together by a central stalk and a peripheral stalk. During catalysis, ATP synthesis in the catalytic domain of F(1) is coupled via a rotary mechanism of the central stalk subunits to proton translocation. Component of the F(0) channel, it forms part of the peripheral stalk, linking F(1) to F(0). The chain is ATP synthase subunit b 1 from Ruegeria sp. (strain TM1040) (Silicibacter sp.).